Consider the following 441-residue polypeptide: Sec-independent protein translocase protein TatCo (441 aa).

The segment at 1–185 (MADEERDAGL…LVGEAPESDQ (185 aa)) is disordered. A compositionally biased stretch (acidic residues) spans 13 to 22 (ADDETDASDD). The span at 51-62 (TPRDETVTHGSD) shows a compositional bias: basic and acidic residues. Residues 75 to 104 (DNGDDSDSDTDAAPDDADDSATDSDADSDD) show a composition bias toward acidic residues. Over residues 105-117 (EPRLLADDEHTSH) the composition is skewed to basic and acidic residues. 2 stretches are compositionally biased toward acidic residues: residues 122–138 (TYDD…DPDA) and 164–173 (EDADFDDEDV). The next 6 helical transmembrane spans lie at 200–220 (LAVV…GADI), 276–296 (VAGL…TYLF), 317–337 (LVLA…AIFA), 357–377 (FNLI…PLFV), 395–415 (RLLF…DPTG), and 416–436 (MAPI…LAAL).

Belongs to the TatC family. Forms a complex with TatA.

The protein resides in the cell membrane. In terms of biological role, part of the twin-arginine translocation (Tat) system that transports large folded proteins containing a characteristic twin-arginine motif in their signal peptide across membranes. The protein is Sec-independent protein translocase protein TatCo of Haloferax volcanii (strain ATCC 29605 / DSM 3757 / JCM 8879 / NBRC 14742 / NCIMB 2012 / VKM B-1768 / DS2) (Halobacterium volcanii).